A 205-amino-acid chain; its full sequence is Outer-membrane lipoprotein LolB (205 aa).

Residues 1–17 form the signal peptide; sequence MFLRHVIVFSLIALLTG. C18 carries N-palmitoyl cysteine lipidation. Residue C18 is the site of S-diacylglycerol cysteine attachment.

It belongs to the LolB family. In terms of assembly, monomer.

The protein localises to the cell outer membrane. In terms of biological role, plays a critical role in the incorporation of lipoproteins in the outer membrane after they are released by the LolA protein. In Pseudomonas savastanoi pv. phaseolicola (strain 1448A / Race 6) (Pseudomonas syringae pv. phaseolicola (strain 1448A / Race 6)), this protein is Outer-membrane lipoprotein LolB.